Here is a 37-residue protein sequence, read N- to C-terminus: Large ribosomal subunit protein bL36 (37 aa).

Belongs to the bacterial ribosomal protein bL36 family.

This is Large ribosomal subunit protein bL36 from Sulfurihydrogenibium sp. (strain YO3AOP1).